Reading from the N-terminus, the 73-residue chain is DNA-directed RNA polymerase subunit omega (73 aa).

Belongs to the RNA polymerase subunit omega family. As to quaternary structure, in cyanobacteria the RNAP catalytic core is composed of 2 alpha, 1 beta, 1 beta', 1 gamma and 1 omega subunit. When a sigma factor is associated with the core the holoenzyme is formed, which can initiate transcription.

It catalyses the reaction RNA(n) + a ribonucleoside 5'-triphosphate = RNA(n+1) + diphosphate. Its function is as follows. Promotes RNA polymerase assembly. Latches the N- and C-terminal regions of the beta' subunit thereby facilitating its interaction with the beta and alpha subunits. The chain is DNA-directed RNA polymerase subunit omega from Gloeobacter violaceus (strain ATCC 29082 / PCC 7421).